We begin with the raw amino-acid sequence, 98 residues long: NADH-ubiquinone oxidoreductase chain 4L (98 aa).

3 consecutive transmembrane segments (helical) span residues 1–21 (MTMVYANIFLAFIMSLMGLLM), 29–49 (SLLCLEGMMLSLFVMMTVTIL), and 61–81 (IILLVFAACEAALGLSLLVMV).

This sequence belongs to the complex I subunit 4L family. As to quaternary structure, core subunit of respiratory chain NADH dehydrogenase (Complex I) which is composed of 45 different subunits.

Its subcellular location is the mitochondrion inner membrane. The enzyme catalyses a ubiquinone + NADH + 5 H(+)(in) = a ubiquinol + NAD(+) + 4 H(+)(out). Functionally, core subunit of the mitochondrial membrane respiratory chain NADH dehydrogenase (Complex I) which catalyzes electron transfer from NADH through the respiratory chain, using ubiquinone as an electron acceptor. Part of the enzyme membrane arm which is embedded in the lipid bilayer and involved in proton translocation. The chain is NADH-ubiquinone oxidoreductase chain 4L (MT-ND4L) from Mirounga angustirostris (Northern elephant seal).